The sequence spans 313 residues: D-alanine--D-alanine ligase (313 aa).

Residues 108 to 308 enclose the ATP-grasp domain; sequence KLVWQQTGVP…YSELVVKVLS (201 aa). Position 138 to 193 (138 to 193) interacts with ATP; that stretch reads VAKLGLPLFVKPASEGSSVAVLKVKTADALPAALAEAATHDKIVIVEKSIEGGGEY. Mg(2+) is bound by residues Asp-262, Glu-275, and Asn-277.

The protein belongs to the D-alanine--D-alanine ligase family. Mg(2+) serves as cofactor. Requires Mn(2+) as cofactor.

Its subcellular location is the cytoplasm. The enzyme catalyses 2 D-alanine + ATP = D-alanyl-D-alanine + ADP + phosphate + H(+). It participates in cell wall biogenesis; peptidoglycan biosynthesis. Its function is as follows. Cell wall formation. The sequence is that of D-alanine--D-alanine ligase from Burkholderia multivorans (strain ATCC 17616 / 249).